A 302-amino-acid polypeptide reads, in one-letter code: Probable 2-(5''-triphosphoribosyl)-3'-dephosphocoenzyme-A synthase (302 aa).

It belongs to the CitG/MdcB family.

The enzyme catalyses 3'-dephospho-CoA + ATP = 2'-(5''-triphospho-alpha-D-ribosyl)-3'-dephospho-CoA + adenine. The chain is Probable 2-(5''-triphosphoribosyl)-3'-dephosphocoenzyme-A synthase from Salmonella gallinarum (strain 287/91 / NCTC 13346).